A 180-amino-acid chain; its full sequence is Ribulose bisphosphate carboxylase small subunit, chloroplastic 2 (180 aa).

Residues 1 to 56 (MASSVLSSAAVATVSRTPAQASMVAPFTGLKSTVGFPATKKNDDITSLASNGGRVQ) constitute a chloroplast transit peptide.

It belongs to the RuBisCO small chain family. In terms of assembly, heterohexadecamer of 8 large and 8 small subunits.

It localises to the plastid. It is found in the chloroplast. RuBisCO catalyzes two reactions: the carboxylation of D-ribulose 1,5-bisphosphate, the primary event in carbon dioxide fixation, as well as the oxidative fragmentation of the pentose substrate. Both reactions occur simultaneously and in competition at the same active site. Although the small subunit is not catalytic it is essential for maximal activity. In Spinacia oleracea (Spinach), this protein is Ribulose bisphosphate carboxylase small subunit, chloroplastic 2.